Reading from the N-terminus, the 201-residue chain is 3-isopropylmalate dehydratase small subunit (201 aa).

It belongs to the LeuD family. LeuD type 1 subfamily. In terms of assembly, heterodimer of LeuC and LeuD.

It carries out the reaction (2R,3S)-3-isopropylmalate = (2S)-2-isopropylmalate. It functions in the pathway amino-acid biosynthesis; L-leucine biosynthesis; L-leucine from 3-methyl-2-oxobutanoate: step 2/4. In terms of biological role, catalyzes the isomerization between 2-isopropylmalate and 3-isopropylmalate, via the formation of 2-isopropylmaleate. The protein is 3-isopropylmalate dehydratase small subunit of Brucella abortus (strain S19).